A 737-amino-acid polypeptide reads, in one-letter code: Protein-glucosylgalactosylhydroxylysine glucosidase (737 aa).

300–301 provides a ligand contact to substrate; that stretch reads WD. The active-site Proton donor is glutamate 430. Position 498-499 (498-499) interacts with substrate; the sequence is KQ. The segment at 681–737 is disordered; it reads RSAGRIQMSPPKLPGSSSSEFPGRTFSDVRDPLQSPLWVTLGSSSPTESLTVDPASE. Positions 721-730 are enriched in polar residues; that stretch reads LGSSSPTESL.

This sequence belongs to the glycosyl hydrolase 65 family.

It carries out the reaction (5R)-5-O-[alpha-D-glucosyl-(1-&gt;2)-beta-D-galactosyl]-5-hydroxy-L-lysyl-[collagen] + H2O = (5R)-5-O-(beta-D-galactosyl)-5-hydroxy-L-lysyl-[collagen] + D-glucose. Functionally, catalyzes the hydrolysis of glucose from the disaccharide unit linked to hydroxylysine residues of collagen and collagen-like proteins. The chain is Protein-glucosylgalactosylhydroxylysine glucosidase from Homo sapiens (Human).